We begin with the raw amino-acid sequence, 347 residues long: UDP-N-acetylglucosamine--N-acetylmuramyl-(pentapeptide) pyrophosphoryl-undecaprenol N-acetylglucosamine transferase (347 aa).

UDP-N-acetyl-alpha-D-glucosamine is bound by residues 11–13 (TGG), Asn-122, Arg-163, Ser-189, and Gln-279.

Belongs to the glycosyltransferase 28 family. MurG subfamily.

The protein localises to the cell inner membrane. The enzyme catalyses di-trans,octa-cis-undecaprenyl diphospho-N-acetyl-alpha-D-muramoyl-L-alanyl-D-glutamyl-meso-2,6-diaminopimeloyl-D-alanyl-D-alanine + UDP-N-acetyl-alpha-D-glucosamine = di-trans,octa-cis-undecaprenyl diphospho-[N-acetyl-alpha-D-glucosaminyl-(1-&gt;4)]-N-acetyl-alpha-D-muramoyl-L-alanyl-D-glutamyl-meso-2,6-diaminopimeloyl-D-alanyl-D-alanine + UDP + H(+). It participates in cell wall biogenesis; peptidoglycan biosynthesis. Its function is as follows. Cell wall formation. Catalyzes the transfer of a GlcNAc subunit on undecaprenyl-pyrophosphoryl-MurNAc-pentapeptide (lipid intermediate I) to form undecaprenyl-pyrophosphoryl-MurNAc-(pentapeptide)GlcNAc (lipid intermediate II). The protein is UDP-N-acetylglucosamine--N-acetylmuramyl-(pentapeptide) pyrophosphoryl-undecaprenol N-acetylglucosamine transferase of Sulfurihydrogenibium sp. (strain YO3AOP1).